The following is a 1308-amino-acid chain: Cilia- and flagella-associated protein 57 C (1308 aa).

WD repeat units lie at residues 57–99 (NEYR…RRKN), 110–154 (YNIK…KCLG), 415–454 (NHTG…IKIS), 504–546 (SPFK…NPSQ), 551–590 (GHTG…QHQQ), 645–689 (LLDI…GKFT), and 694–733 (HDER…ARGM). The stretch at 779–1000 (LNSRDDRIRQ…RDKIDGQKKI (222 aa)) forms a coiled coil.

The protein belongs to the CFAP57 family. As to quaternary structure, forms a heterodimer with CFAP57A. Associates with components of the nexin-dynein regulatory complex (N-DRC) and the CFAP184:CFAP263 complex.

The protein localises to the cell projection. The protein resides in the cilium. Functionally, associates with components of the nexin-dynein regulatory complex (N-DRC), a key regulator of ciliary/flagellar motility, and might act as an inner dynein arm (IDA) hub or linkage. The protein is Cilia- and flagella-associated protein 57 C (CFAP57C) of Tetrahymena thermophila (strain SB210).